Reading from the N-terminus, the 390-residue chain is GTPase Obg (390 aa).

Positions 1 to 159 (MKFIDESLIR…RDLLLELMLL (159 aa)) constitute an Obg domain. One can recognise an OBG-type G domain in the interval 160–333 (ADVGMLGLPN…LCRDIMDFII (174 aa)). GTP is bound by residues 166–173 (GLPNAGKS), 191–195 (FTTLV), 213–216 (DIPG), 283–286 (NKID), and 314–316 (SAA). Mg(2+)-binding residues include Ser173 and Thr193.

Belongs to the TRAFAC class OBG-HflX-like GTPase superfamily. OBG GTPase family. In terms of assembly, monomer. Mg(2+) is required as a cofactor.

The protein resides in the cytoplasm. Functionally, an essential GTPase which binds GTP, GDP and possibly (p)ppGpp with moderate affinity, with high nucleotide exchange rates and a fairly low GTP hydrolysis rate. Plays a role in control of the cell cycle, stress response, ribosome biogenesis and in those bacteria that undergo differentiation, in morphogenesis control. This is GTPase Obg from Haemophilus influenzae (strain 86-028NP).